A 251-amino-acid chain; its full sequence is Large ribosomal subunit protein uL16m (251 aa).

The N-terminal 29 residues, 1–29 (MWRLLTRVPAPLLRMHFSDSWAALPTSAG), are a transit peptide targeting the mitochondrion.

This sequence belongs to the universal ribosomal protein uL16 family. In terms of assembly, component of the mitochondrial ribosome large subunit (39S) which comprises a 16S rRNA and about 50 distinct proteins.

Its subcellular location is the mitochondrion. The polypeptide is Large ribosomal subunit protein uL16m (Mrpl16) (Mus musculus (Mouse)).